The chain runs to 478 residues: Divinyl ether synthase CYP74D3 (478 aa).

Cys432 provides a ligand contact to heme.

Belongs to the cytochrome P450 family. 9-divinyl ether synthase subfamily. In terms of tissue distribution, not detected in leaves, stems or roots of healthy plants.

It is found in the cytoplasm. The protein resides in the cytosol. It catalyses the reaction (9S)-hydroperoxy-(10E,12Z)-octadecadienoate = colneleate + H2O. It carries out the reaction (9S)-hydroperoxy-(10E,12Z,15Z)-octadecatrienoate = colnelenate + H2O. Its function is as follows. Strictly inducible cytochrome P450 involved in the biosynthesis of the anti-fungal toxins colneleate and colnelenate. Can use (9S)-hydroperoxy-(10E,12Z)-octadecadienoate (9-HPOD) and (9S)-hydroperoxy-(10E,12Z,15Z)-octadecatrienoate (9-HPOT) as substrates, but has a very low activity with the corresponding 13-hydroperoxides (13-HPOD and 13-POT). The polypeptide is Divinyl ether synthase CYP74D3 (Nicotiana tabacum (Common tobacco)).